We begin with the raw amino-acid sequence, 414 residues long: F-box protein At3g26010 (414 aa).

The region spanning 5 to 52 (NRTIHLTDAIWTEILARLPLRIIARFKSVSKTWKSTIESVYFRRLFVS) is the F-box domain.

In Arabidopsis thaliana (Mouse-ear cress), this protein is F-box protein At3g26010.